Consider the following 450-residue polypeptide: 23S rRNA (uracil(1939)-C(5))-methyltransferase RlmD (450 aa).

One can recognise a TRAM domain in the interval 1–62 (MPVAGPLDIV…PSYEQAGVVN (62 aa)). 4 residues coordinate [4Fe-4S] cluster: cysteine 75, cysteine 81, cysteine 84, and cysteine 163. Residues glutamine 271, phenylalanine 300, asparagine 305, glutamate 321, asparagine 349, and aspartate 370 each coordinate S-adenosyl-L-methionine. Cysteine 406 serves as the catalytic Nucleophile.

This sequence belongs to the class I-like SAM-binding methyltransferase superfamily. RNA M5U methyltransferase family. RlmD subfamily.

It catalyses the reaction uridine(1939) in 23S rRNA + S-adenosyl-L-methionine = 5-methyluridine(1939) in 23S rRNA + S-adenosyl-L-homocysteine + H(+). In terms of biological role, catalyzes the formation of 5-methyl-uridine at position 1939 (m5U1939) in 23S rRNA. This chain is 23S rRNA (uracil(1939)-C(5))-methyltransferase RlmD, found in Ralstonia pickettii (strain 12J).